The primary structure comprises 674 residues: DNA-directed RNA polymerase subunit beta' (674 aa).

Zn(2+) is bound by residues Cys-69, Cys-71, Cys-87, and Cys-90. Mg(2+) is bound by residues Asp-494, Asp-496, and Asp-498.

Belongs to the RNA polymerase beta' chain family. RpoC1 subfamily. In terms of assembly, in plastids the minimal PEP RNA polymerase catalytic core is composed of four subunits: alpha, beta, beta', and beta''. When a (nuclear-encoded) sigma factor is associated with the core the holoenzyme is formed, which can initiate transcription. Mg(2+) serves as cofactor. Zn(2+) is required as a cofactor.

Its subcellular location is the plastid. The protein localises to the chloroplast. It carries out the reaction RNA(n) + a ribonucleoside 5'-triphosphate = RNA(n+1) + diphosphate. Functionally, DNA-dependent RNA polymerase catalyzes the transcription of DNA into RNA using the four ribonucleoside triphosphates as substrates. The sequence is that of DNA-directed RNA polymerase subunit beta' from Psilotum nudum (Whisk fern).